A 137-amino-acid chain; its full sequence is Nucleoside diphosphate kinase (137 aa).

ATP-binding residues include Lys9, Phe57, Arg85, Thr91, Arg102, and Asn112. The Pros-phosphohistidine intermediate role is filled by His115.

Belongs to the NDK family. In terms of assembly, homotetramer. Requires Mg(2+) as cofactor.

It localises to the cytoplasm. The enzyme catalyses a 2'-deoxyribonucleoside 5'-diphosphate + ATP = a 2'-deoxyribonucleoside 5'-triphosphate + ADP. The catalysed reaction is a ribonucleoside 5'-diphosphate + ATP = a ribonucleoside 5'-triphosphate + ADP. In terms of biological role, major role in the synthesis of nucleoside triphosphates other than ATP. The ATP gamma phosphate is transferred to the NDP beta phosphate via a ping-pong mechanism, using a phosphorylated active-site intermediate. In Campylobacter hominis (strain ATCC BAA-381 / DSM 21671 / CCUG 45161 / LMG 19568 / NCTC 13146 / CH001A), this protein is Nucleoside diphosphate kinase.